Here is a 122-residue protein sequence, read N- to C-terminus: uncharacterized protein (122 aa).

The N-terminal stretch at 1–17 is a signal peptide; the sequence is MKYSSIFSMLSFFILFA.

This is an uncharacterized protein from Escherichia coli (strain K12).